The following is a 493-amino-acid chain: Cytochrome P450 2E1 (493 aa).

298-303 (FAGTET) contributes to the substrate binding site. Residue cysteine 437 participates in heme binding.

It belongs to the cytochrome P450 family. In terms of assembly, interacts with chaperones HSP70 and HSP90; this interaction is required for initial targeting to mitochondria. The cofactor is heme.

It is found in the endoplasmic reticulum membrane. Its subcellular location is the microsome membrane. The protein resides in the mitochondrion inner membrane. It catalyses the reaction an organic molecule + reduced [NADPH--hemoprotein reductase] + O2 = an alcohol + oxidized [NADPH--hemoprotein reductase] + H2O + H(+). It carries out the reaction (5Z,8Z,11Z)-eicosatrienoate + reduced [NADPH--hemoprotein reductase] + O2 = 19-hydroxy-(5Z,8Z,11Z)-eicosatrienoate + oxidized [NADPH--hemoprotein reductase] + H2O + H(+). The enzyme catalyses (5Z,8Z,11Z,14Z,17Z)-eicosapentaenoate + reduced [NADPH--hemoprotein reductase] + O2 = 19-hydroxy-(5Z,8Z,11Z,14Z,17Z)-eicosapentaenoate + oxidized [NADPH--hemoprotein reductase] + H2O + H(+). The catalysed reaction is (4Z,7Z,10Z,13Z,16Z,19Z)-docosahexaenoate + reduced [NADPH--hemoprotein reductase] + O2 = 21-hydroxy-(4Z,7Z,10Z,13Z,16Z,19Z)-docosahexaenoate + oxidized [NADPH--hemoprotein reductase] + H2O + H(+). It catalyses the reaction dodecanoate + reduced [NADPH--hemoprotein reductase] + O2 = 11-hydroxydodecanoate + oxidized [NADPH--hemoprotein reductase] + H2O + H(+). It carries out the reaction tetradecanoate + reduced [NADPH--hemoprotein reductase] + O2 = 13-hydroxytetradecanoate + oxidized [NADPH--hemoprotein reductase] + H2O + H(+). The enzyme catalyses 4-nitrophenol + NADPH + O2 + H(+) = 4-nitrocatechol + NADP(+) + H2O. Its pathway is lipid metabolism; fatty acid metabolism. The omega-1 hydroxylase activity is stimulated by cytochrome b5. In terms of biological role, a cytochrome P450 monooxygenase involved in the metabolism of fatty acids. Mechanistically, uses molecular oxygen inserting one oxygen atom into a substrate, and reducing the second into a water molecule, with two electrons provided by NADPH via cytochrome P450 reductase (NADPH--hemoprotein reductase). Catalyzes the hydroxylation of carbon-hydrogen bonds. Hydroxylates fatty acids specifically at the omega-1 position displaying the highest catalytic activity for saturated fatty acids. May be involved in the oxidative metabolism of xenobiotics. The sequence is that of Cytochrome P450 2E1 from Homo sapiens (Human).